We begin with the raw amino-acid sequence, 595 residues long: Inactive glycosyltransferase 25 family member 3 (595 aa).

The N-terminal stretch at 1–22 (MRAARAAPLLQLLLLLGPWLEA) is a signal peptide. N-linked (GlcNAc...) asparagine glycosylation is found at N75, N153, N237, and N360. The tract at residues 548 to 595 (DTETSSPWDDDSGRLISWSGSQKTLRSPRLDLTGSSGHSLQPQPRDEL) is disordered. Residues 580 to 589 (TGSSGHSLQP) are compositionally biased toward polar residues. The Prevents secretion from ER signature appears at 592–595 (RDEL).

It belongs to the glycosyltransferase 25 family. Ubiquitous. Highly expressed in secretory and nervous tissues.

The protein resides in the endoplasmic reticulum lumen. Functionally, probable cell adhesion protein involved in leukocyte transmigration across the blood-brain barrier. Does not express any beta-galactosyltransferase activity in vitro. The sequence is that of Inactive glycosyltransferase 25 family member 3 (CERCAM) from Homo sapiens (Human).